The sequence spans 991 residues: Antigenic heat-stable 120 kDa protein (991 aa).

Disordered stretches follow at residues 1 to 37 (DTSEFDPLANKEYTEEQKQTEEQEQKEFLSHTTTPAL), 54 to 73 (TPSMSALSGNISPDSQTSDP), and 348 to 384 (GQSKEQPLITPQQTTSSSVEPPQYKQQVPPITPTNQP). Residues 12–29 (EYTEEQKQTEEQEQKEFL) are compositionally biased toward basic and acidic residues. The span at 348–373 (GQSKEQPLITPQQTTSSSVEPPQYKQ) shows a compositional bias: polar residues.

Its subcellular location is the cytoplasm. The chain is Antigenic heat-stable 120 kDa protein (sca4) from Rickettsia sibirica.